The following is a 164-amino-acid chain: MAKPQVFFDLQANGENLGRIVMELRADVVPKTAENFRALCTGEKGFGYKGSTFHRVIPGFMCQGGDFTRHNGTGGKSIYGEKFADENFTLKHTQPGILSMANAGVNTNGSQFFICTAVTSWLDGKHVVFGAVTQGLDIIKKVESYGSDSGKTSKKITIADCGQL.

In terms of domain architecture, PPIase cyclophilin-type spans 7 to 163; sequence FFDLQANGEN…KKITIADCGQ (157 aa).

Belongs to the cyclophilin-type PPIase family. PPIase A subfamily.

The protein localises to the cytoplasm. The catalysed reaction is [protein]-peptidylproline (omega=180) = [protein]-peptidylproline (omega=0). Binds cyclosporin A (CsA). CsA mediates some of its effects via an inhibitory action on PPIase. Functionally, PPIases accelerate the folding of proteins. It catalyzes the cis-trans isomerization of proline imidic peptide bonds in oligopeptides. The chain is Peptidyl-prolyl cis-trans isomerase from Hemicentrotus pulcherrimus (Sea urchin).